We begin with the raw amino-acid sequence, 347 residues long: Putative GDP-L-fucose synthase 2 (347 aa).

The interval 1–20 (MPSQQRSSSGSTAKAGDADG) is disordered. An NADP(+)-binding site is contributed by 41 to 47 (GHRGMVG). The active-site Proton donor/acceptor is the Tyr-168. NADP(+) contacts are provided by residues Lys-172, 195 to 198 (PNNL), and His-211. Substrate-binding residues include Arg-219, Trp-234, Arg-241, and Glu-301.

It belongs to the NAD(P)-dependent epimerase/dehydratase family. Fucose synthase subfamily. Homodimer.

It catalyses the reaction GDP-beta-L-fucose + NADP(+) = GDP-4-dehydro-alpha-D-rhamnose + NADPH + H(+). The protein operates within nucleotide-sugar biosynthesis; GDP-L-fucose biosynthesis via de novo pathway; GDP-L-fucose from GDP-alpha-D-mannose: step 2/2. Functionally, catalyzes the two-step NADP-dependent conversion of GDP-4-dehydro-6-deoxy-D-mannose to GDP-fucose, involving an epimerase and a reductase reaction. This chain is Putative GDP-L-fucose synthase 2, found in Oryza sativa subsp. japonica (Rice).